The chain runs to 262 residues: Ribosomal RNA small subunit methyltransferase G (262 aa).

Positions 72, 77, and 142 each coordinate S-adenosyl-L-methionine. Positions 212–262 are disordered; sequence RSSQLSRAEGRKGRGDGERHDGRQVRRTARDSRRSREVDRDQPTRGQSRST. The span at 219–254 shows a compositional bias: basic and acidic residues; it reads AEGRKGRGDGERHDGRQVRRTARDSRRSREVDRDQP.

The protein belongs to the methyltransferase superfamily. RNA methyltransferase RsmG family.

Its subcellular location is the cytoplasm. Functionally, specifically methylates the N7 position of guanine in position 518 of 16S rRNA. The chain is Ribosomal RNA small subunit methyltransferase G from Frankia alni (strain DSM 45986 / CECT 9034 / ACN14a).